Reading from the N-terminus, the 523-residue chain is Maintenance of mitochondrial morphology protein 1 (523 aa).

Residues 1–43 (MAGSTSASLQTPYFPSSTQINPVRVDHTLPLPPAQPSLSFTQG) lie on the Lumenal side of the membrane. The chain crosses the membrane as a helical span at residues 44–64 (LLVGQLSVVLLIGAFIKFFIF). At 65–523 (GEAPPPPSRG…GSMPDTVTET (459 aa)) the chain is on the cytoplasmic side. 4 disordered regions span residues 70 to 118 (PPSR…SSST), 295 to 349 (TSDQ…SKHG), 420 to 473 (RTGL…IDRG), and 492 to 523 (GGHQNQSGRDGGRGGNEQFAMPGSMPDTVTET). 3 stretches are compositionally biased toward polar residues: residues 74–96 (GLSNRTSTHPRSYSINAASTDSS), 105–118 (STSNILRPVPSSST), and 295–312 (TSDQTMSPIPTPHDTTSE). In terms of domain architecture, SMP-LTD spans 151–412 (QPESLDWFNV…EPRVQVVGLP (262 aa)). Positions 449 to 467 (GVSGGGGSGGGSGGGGGSM) are enriched in gly residues.

The protein belongs to the MMM1 family. As to quaternary structure, homodimer. Component of the ER-mitochondria encounter structure (ERMES) or MDM complex, composed of MMM1, MDM10, MDM12 and MDM34. An MMM1 homodimer associates with one molecule of MDM12 on each side in a pairwise head-to-tail manner, and the SMP-LTD domains of MMM1 and MDM12 generate a continuous hydrophobic tunnel for phospholipid trafficking.

It is found in the endoplasmic reticulum membrane. Its function is as follows. Component of the ERMES/MDM complex, which serves as a molecular tether to connect the endoplasmic reticulum (ER) and mitochondria. Components of this complex are involved in the control of mitochondrial shape and protein biogenesis, and function in nonvesicular lipid trafficking between the ER and mitochondria. The MDM12-MMM1 subcomplex functions in the major beta-barrel assembly pathway that is responsible for biogenesis of all outer membrane beta-barrel proteins, and acts in a late step after the SAM complex. The MDM10-MDM12-MMM1 subcomplex further acts in the TOM40-specific pathway after the action of the MDM12-MMM1 complex. Essential for establishing and maintaining the structure of mitochondria and maintenance of mtDNA nucleoids. In Paracoccidioides brasiliensis (strain Pb03), this protein is Maintenance of mitochondrial morphology protein 1.